Here is a 322-residue protein sequence, read N- to C-terminus: CMP-sialic acid transporter 1 (322 aa).

Topologically, residues 1–2 (MQ) are cytoplasmic. Residues 3-23 (WYLVAALLTVLTSSQGILTTL) traverse the membrane as a helical segment. At 24–33 (SQSNGKYKYD) the chain is on the lumenal side. The helical transmembrane segment at 34–54 (YATIPFLAELFKLSFSSFFLW) threads the bilayer. Over 55–75 (KECQSSSPPRMTKEWRSIRLY) the chain is Cytoplasmic. A helical membrane pass occupies residues 76–96 (LVPSVIYLIHNNVQFATLTYV). Over 97-100 (DPST) the chain is Lumenal. Residues 101–120 (YQIMGNLKIVTTGILFRLVL) traverse the membrane as a helical segment. At 121 to 126 (KRKLSN) the chain is on the cytoplasmic side. A helical membrane pass occupies residues 127-144 (LQWMAVVLLAVGTTTSQV). Topologically, residues 145–157 (KGCGDAPCDSLFS) are lumenal. The helical transmembrane segment at 158–178 (APFQGYMLGILSACLSALAGV) threads the bilayer. At 179-198 (YTEYLMKKNNDSLYWQNVQL) the chain is on the cytoplasmic side. Residues 199–219 (YTFGVIFNMGWLIYGDFKAGF) traverse the membrane as a helical segment. The Lumenal portion of the chain corresponds to 220 to 233 (ERGPWWQRLFNGYS). Residues 234 to 254 (ITTWMVVFNLGSTGLLVSWLM) form a helical membrane-spanning segment. Residues 255 to 262 (KYSDNIVK) are Cytoplasmic-facing. The helical transmembrane segment at 263 to 283 (VYSTSMGMLLTMVLSVYLFNV) threads the bilayer. At 284–286 (RAT) the chain is on the lumenal side.

The protein belongs to the nucleotide-sugar transporter family. CMP-Sialate:CMP antiporter (TC 2.A.7.12) subfamily.

The protein localises to the golgi apparatus membrane. Sugar transporter involved in the transport of CMP-sialic acid from the cytoplasm into the Golgi. May transport important nucleotide sugars such as CMP-Kdo (2-keto-3-deoxy-D-manno-octulosonic acid) in physiological conditions. The chain is CMP-sialic acid transporter 1 from Oryza sativa subsp. indica (Rice).